We begin with the raw amino-acid sequence, 189 residues long: Fucolectin-5 (189 aa).

An N-terminal signal peptide occupies residues 1–31 (MKTCNLTDRMKVKMIMLLFQILAISTLQSDS). Positions 40–189 (QENVAVRGKA…VEVNALLPAN (150 aa)) are F5/8 type C-like. Ca(2+) is bound by residues Asp-70, Asn-72, and Ser-81. Cystine bridges form between Cys-82-Cys-178, Cys-114-Cys-115, and Cys-140-Cys-156. The alpha-L-fucose site is built by His-84 and Arg-111. The Cell attachment site signature appears at 111–113 (RGD). Residue Arg-118 participates in alpha-L-fucose binding. Ca(2+) contacts are provided by Cys-178 and Glu-179.

This sequence belongs to the fucolectin family. Homotrimer. As to expression, gill mucous cells.

It is found in the secreted. Acts as a defensive agent. Recognizes blood group fucosylated oligosaccharides including A, B, H and Lewis B-type antigens. Does not recognize Lewis A antigen and has low affinity for monovalent haptens. This Anguilla japonica (Japanese eel) protein is Fucolectin-5.